A 162-amino-acid polypeptide reads, in one-letter code: Phosphopantetheine adenylyltransferase (162 aa).

S9 provides a ligand contact to substrate. ATP is bound by residues 9–10 and H17; that span reads SF. The substrate site is built by K41, L73, and K87. Residues 88–90, E98, and 122–128 contribute to the ATP site; these read GLR and YSFLSSS.

It belongs to the bacterial CoaD family. In terms of assembly, homohexamer. It depends on Mg(2+) as a cofactor.

The protein resides in the cytoplasm. The enzyme catalyses (R)-4'-phosphopantetheine + ATP + H(+) = 3'-dephospho-CoA + diphosphate. Its pathway is cofactor biosynthesis; coenzyme A biosynthesis; CoA from (R)-pantothenate: step 4/5. Its function is as follows. Reversibly transfers an adenylyl group from ATP to 4'-phosphopantetheine, yielding dephospho-CoA (dPCoA) and pyrophosphate. The sequence is that of Phosphopantetheine adenylyltransferase from Salinispora tropica (strain ATCC BAA-916 / DSM 44818 / JCM 13857 / NBRC 105044 / CNB-440).